The primary structure comprises 174 residues: Keratin-associated protein 9-2 (174 aa).

Tandem repeats lie at residues 8–12 (CCQPT), 13–17 (CCRTT), 18–22 (CCRTT), 37–41 (CCQPA), 42–46 (CCVSS), 51–55 (CCRPT), 61–65 (CCRTT), 66–70 (CCQPT), 75–79 (CCQPS), 80–84 (CCSTP), 85–89 (CCQPT), 90–94 (CCGSS), 95–99 (CCGQT), 144–148 (CCRPA), 149–153 (CCETT), 154–158 (CCRTT), and 168–172 (CCQPS). Positions 8–172 (CCQPTCCRTT…TCVSSCCQPS (165 aa)) are 17 X 5 AA repeats of C-C-[RQVSGE]-[SPTQ]-[TASP].

Belongs to the KRTAP type 9 family. As to quaternary structure, interacts with hair keratins.

In the hair cortex, hair keratin intermediate filaments are embedded in an interfilamentous matrix, consisting of hair keratin-associated proteins (KRTAP), which are essential for the formation of a rigid and resistant hair shaft through their extensive disulfide bond cross-linking with abundant cysteine residues of hair keratins. The matrix proteins include the high-sulfur and high-glycine-tyrosine keratins. This is Keratin-associated protein 9-2 (KRTAP9-2) from Homo sapiens (Human).